A 527-amino-acid polypeptide reads, in one-letter code: Heat shock factor protein HSF8 (527 aa).

Over residues 1–13 (MEPNSSGSGKAAV) the composition is skewed to low complexity. Disordered stretches follow at residues 1 to 37 (MEPN…PSAN), 130 to 160 (RRKP…HSAS), 243 to 275 (NESN…ADGQ), 300 to 343 (SPRL…TSGK), and 476 to 501 (QSPS…QING). Residues 25–37 (QPAPAPAPMPSAN) show a composition bias toward pro residues. A DNA-binding region spans residues 39–133 (PPPFLVKTYD…LLKSISRRKP (95 aa)). A compositionally biased stretch (low complexity) spans 136-157 (GHAQQQQQPHGHAQQQMQPPGH). Polar residues-rich tracts occupy residues 319–328 (SPQSNASSGR) and 491–501 (NTSETKPQING).

Belongs to the HSF family. In terms of assembly, homotrimer. Post-translationally, exhibits temperature-dependent phosphorylation.

It is found in the nucleus. In terms of biological role, DNA-binding protein that specifically binds heat shock promoter elements (HSE) and activates transcription. The polypeptide is Heat shock factor protein HSF8 (HSF8) (Solanum peruvianum (Peruvian tomato)).